Consider the following 258-residue polypeptide: Imidazole glycerol phosphate synthase subunit HisF (258 aa).

Catalysis depends on residues aspartate 11 and aspartate 130.

The protein belongs to the HisA/HisF family. Heterodimer of HisH and HisF.

It is found in the cytoplasm. It catalyses the reaction 5-[(5-phospho-1-deoxy-D-ribulos-1-ylimino)methylamino]-1-(5-phospho-beta-D-ribosyl)imidazole-4-carboxamide + L-glutamine = D-erythro-1-(imidazol-4-yl)glycerol 3-phosphate + 5-amino-1-(5-phospho-beta-D-ribosyl)imidazole-4-carboxamide + L-glutamate + H(+). It participates in amino-acid biosynthesis; L-histidine biosynthesis; L-histidine from 5-phospho-alpha-D-ribose 1-diphosphate: step 5/9. Its function is as follows. IGPS catalyzes the conversion of PRFAR and glutamine to IGP, AICAR and glutamate. The HisF subunit catalyzes the cyclization activity that produces IGP and AICAR from PRFAR using the ammonia provided by the HisH subunit. The protein is Imidazole glycerol phosphate synthase subunit HisF of Yersinia enterocolitica serotype O:8 / biotype 1B (strain NCTC 13174 / 8081).